Reading from the N-terminus, the 264-residue chain is 3-methyl-2-oxobutanoate hydroxymethyltransferase (264 aa).

Asp46 and Asp85 together coordinate Mg(2+). Residues 46-47 (DS), Asp85, and Lys113 each bind 3-methyl-2-oxobutanoate. Residue Glu115 coordinates Mg(2+). The Proton acceptor role is filled by Glu181.

The protein belongs to the PanB family. As to quaternary structure, homodecamer; pentamer of dimers. It depends on Mg(2+) as a cofactor.

The protein resides in the cytoplasm. The catalysed reaction is 3-methyl-2-oxobutanoate + (6R)-5,10-methylene-5,6,7,8-tetrahydrofolate + H2O = 2-dehydropantoate + (6S)-5,6,7,8-tetrahydrofolate. It functions in the pathway cofactor biosynthesis; (R)-pantothenate biosynthesis; (R)-pantoate from 3-methyl-2-oxobutanoate: step 1/2. Catalyzes the reversible reaction in which hydroxymethyl group from 5,10-methylenetetrahydrofolate is transferred onto alpha-ketoisovalerate to form ketopantoate. This chain is 3-methyl-2-oxobutanoate hydroxymethyltransferase, found in Salmonella typhi.